Reading from the N-terminus, the 337-residue chain is Riboflavin biosynthesis protein RibD (337 aa).

The deaminase stretch occupies residues Met-1–Arg-157. Residues Pro-13–Glu-124 enclose the CMP/dCMP-type deaminase domain. His-63 lines the Zn(2+) pocket. Glu-65 acts as the Proton donor in catalysis. Cys-88 and Cys-97 together coordinate Zn(2+). Residues Arg-158–Arg-337 form a reductase region. NADP(+) is bound by residues Ala-166 and Thr-173 to Ala-176. Ser-180 provides a ligand contact to substrate. Trp-182 serves as a coordination point for NADP(+). Position 196 (Arg-196) interacts with substrate. 2 residues coordinate NADP(+): Thr-208 and Asp-212. Residues Leu-216, Arg-219, and Glu-279 each contribute to the substrate site. Gly-281 to Gly-287 provides a ligand contact to NADP(+).

In the N-terminal section; belongs to the cytidine and deoxycytidylate deaminase family. This sequence in the C-terminal section; belongs to the HTP reductase family. Zn(2+) serves as cofactor.

The enzyme catalyses 2,5-diamino-6-hydroxy-4-(5-phosphoribosylamino)-pyrimidine + H2O + H(+) = 5-amino-6-(5-phospho-D-ribosylamino)uracil + NH4(+). It catalyses the reaction 5-amino-6-(5-phospho-D-ribitylamino)uracil + NADP(+) = 5-amino-6-(5-phospho-D-ribosylamino)uracil + NADPH + H(+). Its pathway is cofactor biosynthesis; riboflavin biosynthesis; 5-amino-6-(D-ribitylamino)uracil from GTP: step 2/4. It functions in the pathway cofactor biosynthesis; riboflavin biosynthesis; 5-amino-6-(D-ribitylamino)uracil from GTP: step 3/4. Converts 2,5-diamino-6-(ribosylamino)-4(3h)-pyrimidinone 5'-phosphate into 5-amino-6-(ribosylamino)-2,4(1h,3h)-pyrimidinedione 5'-phosphate. The polypeptide is Riboflavin biosynthesis protein RibD (ribD) (Corynebacterium ammoniagenes (Brevibacterium ammoniagenes)).